Consider the following 128-residue polypeptide: MEVLNAIGRRKTSVARVYLQSGKGSIVVNGLDFKTYFKTEPLQISVESPLNLVAEAGKYDINVNVQGGGVTGQAEAIRLGIARALVLVNSEFKSPLRKEGLMTRDSRMVERKKYGKRKARKRFQFSKR.

Belongs to the universal ribosomal protein uS9 family.

The chain is Small ribosomal subunit protein uS9 from Cytophaga hutchinsonii (strain ATCC 33406 / DSM 1761 / CIP 103989 / NBRC 15051 / NCIMB 9469 / D465).